The primary structure comprises 301 residues: MMRIGLFLLTNLAVLVVAGIILSLFGVGSYHGAGGLNLGNLLVICFVFGMVGSLVSLFMSKWMAKKTTGTELIDPNAPRNQAESWLLQTVAELSQRAGINMPEVGIFPSYQSNAFATGWNKNDALVAVSSGLLERMNKDELRAVLAHEIGHVANGDMVTLALIQGVVNAFVMFFARVVGDFIDRNVFGRQDNEAPGMGYFIITMVLDIVFGILASAIVMWFSRYREYRADEAGARLAGKQAMISALLRLQAETELPDQMPKEMKAFAIAEGKEQGFSLAALFQTHPTIEQRVAALHQLDCP.

The next 2 membrane-spanning stretches (helical) occupy residues 4–24 (IGLF…ILSL) and 38–58 (LGNL…VSLF). Histidine 147 is a Zn(2+) binding site. Glutamate 148 is a catalytic residue. Histidine 151 contacts Zn(2+). A run of 2 helical transmembrane segments spans residues 155 to 175 (GDMV…MFFA) and 200 to 220 (FIIT…IVMW). Glutamate 226 serves as a coordination point for Zn(2+).

The protein belongs to the peptidase M48B family. The cofactor is Zn(2+).

It localises to the cell inner membrane. The sequence is that of Protease HtpX from Acinetobacter baumannii (strain AB307-0294).